We begin with the raw amino-acid sequence, 474 residues long: MKLLQKKGYKVERPLNKGSYGTVVLAHRLFRTPRCKDLKYAIKCIKKPAYTFLQEVNILRQLSRSRHRNIIHFVESFEDNVYYYVVLEYCPLGDLYECILNNDFPNAKNQPEMIKNIFLQIIDGVAHLHSHGIYHRDLKPENFLLSLSEDGSELVVKISDFGLACRDKISYDFGTGSDRYMAPEQFEEVDGAGYSPRAADIWALGICLLNLIFARNPFTYPHEKDPIFADYMLDAMTLFDVFPTLSQDTYNVLRACLCVSPEKRSLAKTREAVLAVTKWTTDDEELESFVNEEEEFRASDFMPAEDNVRCTQSDREPLRTPSVLTPANTIQRGLLPSKLPALSDVDENISTSSSPRSPASLAPVNNSERSYDSGLGESLNNMHIGKSIATAVPVNTKRSPYSCSAPAIVFPNSIKGNKDHLKFGRSWCDMDEEDEEDIVSFGSNDDFGASDELSSKHIGLADDWNVLSQWNDNS.

A Protein kinase domain is found at 9–280 (YKVERPLNKG…EAVLAVTKWT (272 aa)). ATP-binding positions include 15–23 (LNKGSYGTV) and Lys-43. The active-site Proton acceptor is Asp-137. The segment at 345 to 373 (VDENISTSSSPRSPASLAPVNNSERSYDS) is disordered. The span at 350-363 (STSSSPRSPASLAP) shows a compositional bias: low complexity. 6 positions are modified to phosphoserine: Ser-353, Ser-354, Ser-357, Ser-378, Ser-404, and Ser-413.

Belongs to the protein kinase superfamily. Ser/Thr protein kinase family.

The protein resides in the cytoplasm. The protein localises to the nucleus. The enzyme catalyses L-seryl-[protein] + ATP = O-phospho-L-seryl-[protein] + ADP + H(+). It carries out the reaction L-threonyl-[protein] + ATP = O-phospho-L-threonyl-[protein] + ADP + H(+). In Schizosaccharomyces pombe (strain 972 / ATCC 24843) (Fission yeast), this protein is Serine/threonine-protein kinase ksp1 (ksp1).